Here is a 493-residue protein sequence, read N- to C-terminus: Cytochrome P450 monooxygenase olcG (493 aa).

The helical transmembrane segment at Gly-15–Phe-35 threads the bilayer. Heme is bound at residue Cys-429.

The protein belongs to the cytochrome P450 family. The cofactor is heme.

The protein localises to the membrane. Its pathway is secondary metabolite biosynthesis; terpenoid biosynthesis. In terms of biological role, cytochrome P450 monooxygenase; part of the gene cluster that mediates the biosynthesis of 15-deoxyoxalicine B. The first step of the pathway is the synthesis of nicotinyl-CoA from nicotinic acid by the nicotinic acid-CoA ligase olcI. Nicotinyl-CoA is then a substrate of polyketide synthase olcA to produce 4-hydroxy-6-(3-pyridinyl)-2H-pyran-2-one (HPPO) which is further prenylated by the polyprenyl transferase olcH to yield geranylgeranyl-HPPO. Geranylgeranyl pyrophosphate is provided by the cluster-specific geranylgeranyl pyrophosphate synthase olcC. The FAD-dependent monooxygenase olcE catalyzes the epoxidation of geranylgeranyl-HPPO and the terpene cyclase olcD catalyzes the cyclization of the terpenoid component, resulting in the formation of the tricyclic terpene moiety seen in predecaturin E. The cytochrome P450 monooxygenase then catalyzes the allylic oxidation of predecaturin E, which is followed by spirocylization with concomitant loss of one molecule of water to form decaturin E. Decaturin E is the substrate of the cytochrome P450 monooxygenase olcJ which hydroxylates it at the C-29 position to form decaturin F. The short-chain dehydrogenase/reductase olcF may catalyze the oxidation of decaturin F to generate the 29-hydroxyl-27-one intermediate, and subsequent hemiacetal formation probably leads to the formation of decaturin C. The dioxygenase olcK may be a peroxisomal enzyme that catalyzes the hydroxylation of decaturin C into decaturin A once decaturin C is shuttled into the peroxisome by the MFS transporter olcL. Finally the cytochrome P450 monooxygenase olcB catalyzes the oxidative rearrangement to yield 15-deoxyoxalicine B. In the absence of olcJ, decaturin E may be shunted to a pathway in which it is oxidized to a ketone, possibly by olcF, to form decaturin D, which undergoes further allylic oxidation to yield decaturin G. Moreover, in the absence of oclK or oclL, oclB can convert decaturin C into 15-deoxyoxalicine A. This Penicillium canescens protein is Cytochrome P450 monooxygenase olcG.